A 561-amino-acid polypeptide reads, in one-letter code: Asparagine synthetase [glutamine-hydrolyzing] (561 aa).

Cysteine 2 acts as the For GATase activity in catalysis. The 190-residue stretch at 2 to 191 (CGIWALFGSD…PGHYEVLDLK (190 aa)) folds into the Glutamine amidotransferase type-2 domain. L-glutamine is bound by residues 49–53 (RLAVV), 75–77 (NGE), and aspartate 97. The Asparagine synthetase domain occupies 213–536 (HALYDGVEKL…PGRADWLPHY (324 aa)). ATP-binding positions include leucine 256, isoleucine 288, and 363–364 (SG). At lysine 385 the chain carries N6-acetyllysine. Threonine 545 is subject to Phosphothreonine.

It carries out the reaction L-aspartate + L-glutamine + ATP + H2O = L-asparagine + L-glutamate + AMP + diphosphate + H(+). It participates in amino-acid biosynthesis; L-asparagine biosynthesis; L-asparagine from L-aspartate (L-Gln route): step 1/1. In Bos taurus (Bovine), this protein is Asparagine synthetase [glutamine-hydrolyzing] (ASNS).